The following is a 216-amino-acid chain: Peptide methionine sulfoxide reductase MsrA (216 aa).

The active site involves Cys-54.

Belongs to the MsrA Met sulfoxide reductase family.

The enzyme catalyses L-methionyl-[protein] + [thioredoxin]-disulfide + H2O = L-methionyl-(S)-S-oxide-[protein] + [thioredoxin]-dithiol. The catalysed reaction is [thioredoxin]-disulfide + L-methionine + H2O = L-methionine (S)-S-oxide + [thioredoxin]-dithiol. In terms of biological role, has an important function as a repair enzyme for proteins that have been inactivated by oxidation. Catalyzes the reversible oxidation-reduction of methionine sulfoxide in proteins to methionine. The sequence is that of Peptide methionine sulfoxide reductase MsrA from Xanthomonas campestris pv. campestris (strain ATCC 33913 / DSM 3586 / NCPPB 528 / LMG 568 / P 25).